Reading from the N-terminus, the 164-residue chain is Methyl-coenzyme M reductase I operon protein D (164 aa).

MCR is composed of three subunits: alpha, beta, and gamma. The function of proteins C and D is not known.

This chain is Methyl-coenzyme M reductase I operon protein D (mcrD), found in Methanocaldococcus jannaschii (strain ATCC 43067 / DSM 2661 / JAL-1 / JCM 10045 / NBRC 100440) (Methanococcus jannaschii).